Reading from the N-terminus, the 1032-residue chain is Histone lysine demethylase PHF8 (1032 aa).

The segment at 5–56 (PVYCLCRLPYDVTRFMIECDVCQDWFHGSCVGVEEDKAAEIDLYHCPNCQVT) adopts a PHD-type zinc-finger fold. A linker region spans residues 65–83 (RRGAVKHADVGLGRDSGRP). One can recognise a JmjC domain in the interval 199 to 355 (FSDTRLSNLV…MQLRAYEIEK (157 aa)). T248 provides a ligand contact to substrate. Residues H251 and D253 each coordinate Fe cation. K268 serves as a coordination point for substrate. Position 323 (H323) interacts with Fe cation. Disordered regions lie at residues 455-515 (SGTP…KGKE), 577-660 (QGKK…VDFD), 697-857 (LDSA…REGA), 875-923 (QQEQ…EPPV), and 943-1015 (EYTA…ATAK). The span at 473–483 (QLNTPLTFSQH) shows a compositional bias: polar residues. Positions 583 to 592 (AGSANGAGSS) are enriched in low complexity. Residues 620-632 (PRRRPSLPSKKKL) show a composition bias toward basic residues. Over residues 644 to 655 (PCSDPHRIREPG) the composition is skewed to basic and acidic residues. Low complexity-rich tracts occupy residues 699–710 (SALSEEAPASPS) and 724–739 (PPSSSSSSSSSSPLSI). A compositionally biased stretch (basic residues) spans 774–784 (PGKRPIKRPAR). Residues 848–857 (KQERPVREGA) are compositionally biased toward basic and acidic residues. Residues 882 to 891 (ITKRKYTKKK) are compositionally biased toward basic residues. The span at 970-990 (SRRPSLSPQNSSSYSPSAPSP) shows a compositional bias: low complexity.

This sequence belongs to the JHDM1 histone demethylase family. JHDM1D subfamily. Fe(2+) serves as cofactor.

The protein resides in the nucleus. It localises to the nucleolus. The catalysed reaction is N(6),N(6)-dimethyl-L-lysyl(36)-[histone H3] + 2 2-oxoglutarate + 2 O2 = L-lysyl(36)-[histone H3] + 2 formaldehyde + 2 succinate + 2 CO2. It carries out the reaction N(6),N(6)-dimethyl-L-lysyl(9)-[histone H3] + 2 2-oxoglutarate + 2 O2 = L-lysyl(9)-[histone H3] + 2 formaldehyde + 2 succinate + 2 CO2. Functionally, histone lysine demethylase with selectivity for the di- and monomethyl states that plays a key role cell cycle progression, rDNA transcription and brain development. Demethylates mono- and dimethylated histone H3 'Lys-9' residue (H3K9Me1 and H3K9Me2), dimethylated H3 'Lys-27' (H3K27Me2) and monomethylated histone H4 'Lys-20' residue (H4K20Me1). Acts as a transcription activator as H3K9Me1, H3K9Me2, H3K27Me2 and H4K20Me1 are epigenetic repressive marks. Involved in cell cycle progression by being required to control G1-S transition. Acts as a coactivator of rDNA transcription, by activating polymerase I (pol I) mediated transcription of rRNA genes. Has activity toward H4K20Me1 only when nucleosome is used as a substrate and when not histone octamer is used as substrate. Required for brain development, probably by regulating expression of neuron-specific genes. This Danio rerio (Zebrafish) protein is Histone lysine demethylase PHF8 (phf8).